Consider the following 532-residue polypeptide: Transcriptional regulatory protein RtcR (532 aa).

The Sigma-54 factor interaction domain occupies 186 to 424 (IATRNPHFNR…LSASVTRMAT (239 aa)). Residues 215-222 (GPTGAGKS) and 281-290 (ANGGMLFLDE) each bind ATP. Positions 485–504 (KSLSAAGRQLFDVSRQGKAS) form a DNA-binding region, H-T-H motif.

Transcriptional repressor of the rtcAB genes. Interacts with sigma-54. The polypeptide is Transcriptional regulatory protein RtcR (rtcR) (Escherichia coli (strain K12)).